A 586-amino-acid polypeptide reads, in one-letter code: Regulatory protein NPR3 (586 aa).

Phosphoserine is present on serine 10. Positions 60-135 (SDAEIIVDGV…IYTGRLKPFP (76 aa)) constitute a BTB domain. Residues 138 to 152 (VSTCVDPVCSHDCCR) form a C2HC NPR-type zinc finger. Positions 141, 146, 148, and 151 each coordinate Zn(2+). ANK repeat units follow at residues 261-291 (ERIGKILKALDSDDVELVKLLLTESDITLDQ), 293-320 (NGLHYSVVYSDPKVVAEILALDMGDVNY), and 324-353 (RGYTVLHFAAMRREPSIIISLIDKGANASE). Residues 383-523 (ESSKARLCID…MAEYIDDDIL (141 aa)) are salicylic acid-binding core (SBC). Arginine 428 is a salicylate binding site. Residues 554 to 586 (YSKDKESKIARSCLSASSSPSSSSIRDDLHNTT) form a disordered region. Positions 565–577 (SCLSASSSPSSSS) are enriched in low complexity.

The protein belongs to the plant 'ANKYRIN-BTB/POZ' family. 'NPR1-like' subfamily. Forms homodimers and heterodimers with NPR4 in the presence of salicylic acid (SA). Interacts with TGA2, TGA3, TGA5 and TGA6. Interacts with CUL3A, a core component of the cullin-RING ubiquitin ligases (CRL). Interacts with TGA2 in vivo in the nucleus. Binds to NPR1; this interaction is promoted by association with SA, probably due to conformational changes.

The protein resides in the nucleus. It functions in the pathway protein modification; protein ubiquitination. In terms of biological role, salicylic acid (SA)-binding substrate-specific adapter of an E3 ubiquitin-protein ligase complex (CUL3-RBX1-BTB) which mediates the ubiquitination and subsequent proteasomal degradation of NPR1 in response to SA. Together with NPR4, acts as receptor of salicylic acid to monitor immunity in a NPR1-dependent manner and induce systemic acquired resistance (SAR). Involved in the regulation of basal defense responses against pathogens, and may be implicated in the cross-talk between the SA- and JA-dependent signaling pathways. The chain is Regulatory protein NPR3 from Arabidopsis thaliana (Mouse-ear cress).